The sequence spans 419 residues: MTTQFSVAGIELELARYPKDQESNLQAWDAADEHLIKHLIETEQTPVVTAIINDNFGALTACLRSIAPTWPLMVETDAKTSLLGNLQNLATNNLSSEGIEWLNSREALPEQIELVLMKLPKNLTYFAHQLNRLSQVLPKGTQVLISAKAKSINKSVLELIGKNLGSASASLTWKKTRVITCISDGEIRSLPKEMQWSVPRLNLEIRNLSNVFAANKLDIGAEIMLENMPKGDFKSIIDLGCGNGILGLHAKQLFPQAYIHFVDDSEMAIESAKQNWALNKLDTQGLVGEQATFGWDDCLTHMSEGVRPDLVLCNPPFHQGEAITDHIAWQMFLQSWRALKNGGILHVVGNRHLAYHIKLQRIFKNCTTVASNGKFVILQAQKISKKAEPFETHPTEAEAKVEVTESKPHPQSSLYGTKK.

Residues 386 to 408 (KAEPFETHPTEAEAKVEVTESKP) show a composition bias toward basic and acidic residues. Residues 386–419 (KAEPFETHPTEAEAKVEVTESKPHPQSSLYGTKK) form a disordered region. Residues 409-419 (HPQSSLYGTKK) are compositionally biased toward polar residues.

It belongs to the methyltransferase superfamily. RlmG family.

The protein resides in the cytoplasm. The enzyme catalyses guanosine(1835) in 23S rRNA + S-adenosyl-L-methionine = N(2)-methylguanosine(1835) in 23S rRNA + S-adenosyl-L-homocysteine + H(+). In terms of biological role, specifically methylates the guanine in position 1835 (m2G1835) of 23S rRNA. This is Ribosomal RNA large subunit methyltransferase G from Shewanella woodyi (strain ATCC 51908 / MS32).